The following is a 221-amino-acid chain: MGNEVPRASSFQMLMLLLLLLLLRAERLRGAELTFELPDNAKQCFHEEVEQGVKFSLDYQVITGGHYDVDCYVEDPMGNIIYRETKKQYDSFTYKTEVKGVYRFCFSNEFSTFSHKTVYFDFQVGDEPPILPDMGNRVTALTQMESACVTIHEALKTVIDSQTHYRLREAQDRARAEDLNSRVSYWSVGETIALFVVSFSQVLLLKSFFTEKRPINRAVHS.

The first 30 residues, 1-30, serve as a signal peptide directing secretion; it reads MGNEVPRASSFQMLMLLLLLLLLRAERLRG. At 31 to 184 the chain is on the lumenal side; the sequence is AELTFELPDN…RAEDLNSRVS (154 aa). Residues 42-124 form the GOLD domain; that stretch reads KQCFHEEVEQ…HKTVYFDFQV (83 aa). Dimethylated arginine is present on arginine 103. A helical transmembrane segment spans residues 185–205; the sequence is YWSVGETIALFVVSFSQVLLL. Residues 206-221 are Cytoplasmic-facing; it reads KSFFTEKRPINRAVHS. The short motif at 208-209 is the COPII vesicle coat-binding element; the sequence is FF. The COPI vesicle coat-binding signature appears at 208-221; it reads FFTEKRPINRAVHS.

It belongs to the EMP24/GP25L family. Monomer in endoplasmic reticulum, endoplasmic reticulum-Golgi intermediate compartment and cis-Golgi network. Interacts (via C-terminus) with COPG1; the interaction involves dimeric TMED3; however, there are conflicting reports on the interaction. Interacts with GORASP1 and GORASP2.

The protein resides in the endoplasmic reticulum-Golgi intermediate compartment membrane. The protein localises to the golgi apparatus. It is found in the cis-Golgi network membrane. It localises to the golgi stack membrane. Its subcellular location is the endoplasmic reticulum membrane. The protein resides in the cytoplasmic vesicle. The protein localises to the COPI-coated vesicle membrane. Its function is as follows. Potential role in vesicular protein trafficking, mainly in the early secretory pathway. Contributes to the coupled localization of TMED2 and TMED10 in the cis-Golgi network. In Rattus norvegicus (Rat), this protein is Transmembrane emp24 domain-containing protein 3 (Tmed3).